The primary structure comprises 342 residues: Nicotinate-nucleotide--dimethylbenzimidazole phosphoribosyltransferase (342 aa).

Residue E311 is the Proton acceptor of the active site.

This sequence belongs to the CobT family.

It carries out the reaction 5,6-dimethylbenzimidazole + nicotinate beta-D-ribonucleotide = alpha-ribazole 5'-phosphate + nicotinate + H(+). It participates in nucleoside biosynthesis; alpha-ribazole biosynthesis; alpha-ribazole from 5,6-dimethylbenzimidazole: step 1/2. Functionally, catalyzes the synthesis of alpha-ribazole-5'-phosphate from nicotinate mononucleotide (NAMN) and 5,6-dimethylbenzimidazole (DMB). The protein is Nicotinate-nucleotide--dimethylbenzimidazole phosphoribosyltransferase of Vibrio atlanticus (strain LGP32) (Vibrio splendidus (strain Mel32)).